A 160-amino-acid chain; its full sequence is Protein CrtK (160 aa).

Helical transmembrane passes span 3–23 (LTLFAVYFVACACAGATGAIF), 37–57 (WVPPNWLFPVAWSTLYILMSI), 76–96 (LAFWAVQIAVNTLWTPIFFGL), 101–121 (GGMLVLVLLWLSVFATCVLFW), and 129–149 (LMFVPYVIWVTVAGALNFSVW).

It belongs to the TspO/BZRP family.

The protein localises to the cell inner membrane. It functions in the pathway carotenoid biosynthesis; spheroidene biosynthesis. The polypeptide is Protein CrtK (crtK) (Rhodobacter capsulatus (strain ATCC BAA-309 / NBRC 16581 / SB1003)).